The primary structure comprises 150 residues: Large ribosomal subunit protein eL19 (150 aa).

The tract at residues 55 to 89 is disordered; sequence IKGQSRYRAKIRHEQKKKGRHRGPGSRKGKKTARM.

This sequence belongs to the eukaryotic ribosomal protein eL19 family. In terms of assembly, part of the 50S ribosomal subunit.

Binds to the 23S rRNA. The polypeptide is Large ribosomal subunit protein eL19 (Pyrococcus furiosus (strain ATCC 43587 / DSM 3638 / JCM 8422 / Vc1)).